Here is a 272-residue protein sequence, read N- to C-terminus: MFDIIKAVIIGIVEGLTEFLPISSTGHIDLVNHVIKLSQSQDFISMFEYVIQFGAILAVVLLYFNKLNPFSKPTAKARNATWQLWAKVIIAVLPSAVVGLPLNSWMDEHLHTPIVVATTLIVYGILFIILENYLKNKSAHITTLADITYQTALLIGLFQVLSIVPGTSRSGATILGALLIGTSRYVATEFSFFLAIPTMVGVLIIKIGKYLWQGNGFSGEQWAVLMTGSIVSFLVAIVAIKWLLKFVQTHDFKPFGWYRIALGAIVLLVMFI.

7 consecutive transmembrane segments (helical) span residues 2–22, 43–63, 82–102, 110–130, 185–205, 224–244, and 252–272; these read FDII…FLPI, FISM…VLLY, WQLW…GLPL, LHTP…FIIL, YVAT…VLII, VLMT…KWLL, and FKPF…VMFI.

Belongs to the UppP family.

The protein localises to the cell membrane. The catalysed reaction is di-trans,octa-cis-undecaprenyl diphosphate + H2O = di-trans,octa-cis-undecaprenyl phosphate + phosphate + H(+). In terms of biological role, catalyzes the dephosphorylation of undecaprenyl diphosphate (UPP). Confers resistance to bacitracin. This chain is Undecaprenyl-diphosphatase, found in Lacticaseibacillus casei (strain BL23) (Lactobacillus casei).